A 371-amino-acid polypeptide reads, in one-letter code: Forkhead box protein J1.2 (371 aa).

Disordered stretches follow at residues 45 to 74 and 80 to 99; these read ANSR…APRT and VAVP…PVQE. The fork-head DNA-binding region spans 109–203; that stretch reads KPPYSYATLI…VNGVLKRRRM (95 aa). The tract at residues 228-248 is disordered; the sequence is PSSHHMQHISGGHRQSRRYEK.

This sequence belongs to the FOXJ1 family. Expressed diffusely through much of gastrula and neurula stage embryos. At stage 23 (late neurula), limited to the otic vesicle. By stage 28 (tailbud), also expressed transiently in the presumptive nephrostomes of the pronephros. At stage 35 (early tadpole), expressed broadly in the head and strongly expressed in the developing gill structures.

Its subcellular location is the nucleus. In terms of biological role, key transcription factor required for motile ciliogenesis. Activates genes essential for motile cilia formation and function. The sequence is that of Forkhead box protein J1.2 from Xenopus tropicalis (Western clawed frog).